A 706-amino-acid chain; its full sequence is ATP-dependent DNA helicase HMI1, mitochondrial (706 aa).

In terms of domain architecture, UvrD-like helicase ATP-binding spans 5–277 (TPSQWKVINK…LKLFDNFRST (273 aa)). Residues 29 to 34 (GSGKTL) and Arg-275 each bind ATP. The region spanning 278–593 (PEIISLASKI…KLSTIHSAKG (316 aa)) is the UvrD-like helicase C-terminal domain. A propeptide spans 693-706 (YSSLRGCKSVFRRI) (cleaved upon import into mitochondrion).

It belongs to the helicase family. UvrD subfamily. Mg(2+) serves as cofactor.

It localises to the mitochondrion inner membrane. It carries out the reaction Couples ATP hydrolysis with the unwinding of duplex DNA by translocating in the 3'-5' direction.. The enzyme catalyses ATP + H2O = ADP + phosphate + H(+). Required for mitochondrial genome maintenance and mitochondrial DNA inheritance. The sequence is that of ATP-dependent DNA helicase HMI1, mitochondrial (HMI1) from Saccharomyces cerevisiae (strain ATCC 204508 / S288c) (Baker's yeast).